A 104-amino-acid chain; its full sequence is Putative arsenate reductase (104 aa).

The active site involves Cys-12.

This sequence belongs to the ArsC family.

The enzyme catalyses [glutaredoxin]-dithiol + arsenate + glutathione + H(+) = glutathionyl-S-S-[glutaredoxin] + arsenite + H2O. Reduction of arsenate [As(V)] to arsenite [As(III)]. This protein expands the substrate specificity of ArsAB pump which can extrude arsenite and antimonite to allow for arsenate pumping and resistance. The polypeptide is Putative arsenate reductase (yfjU) (Escherichia coli (strain K12)).